A 264-amino-acid chain; its full sequence is Phosphonoacetaldehyde hydrolase (264 aa).

Asp9 functions as the Nucleophile in the catalytic mechanism. Asp9 and Ala11 together coordinate Mg(2+). The active-site Schiff-base intermediate with substrate is the Lys50. Asp183 contributes to the Mg(2+) binding site.

The protein belongs to the HAD-like hydrolase superfamily. PhnX family. As to quaternary structure, homodimer. Requires Mg(2+) as cofactor.

The enzyme catalyses phosphonoacetaldehyde + H2O = acetaldehyde + phosphate + H(+). Involved in phosphonate degradation. This chain is Phosphonoacetaldehyde hydrolase, found in Bacillus cereus (strain G9842).